The primary structure comprises 448 residues: Methylenetetrahydrofolate--tRNA-(uracil-5-)-methyltransferase TrmFO (448 aa).

An FAD-binding site is contributed by 13–18 (GAGLAG).

The protein belongs to the MnmG family. TrmFO subfamily. FAD serves as cofactor.

The protein resides in the cytoplasm. The enzyme catalyses uridine(54) in tRNA + (6R)-5,10-methylene-5,6,7,8-tetrahydrofolate + NADH + H(+) = 5-methyluridine(54) in tRNA + (6S)-5,6,7,8-tetrahydrofolate + NAD(+). The catalysed reaction is uridine(54) in tRNA + (6R)-5,10-methylene-5,6,7,8-tetrahydrofolate + NADPH + H(+) = 5-methyluridine(54) in tRNA + (6S)-5,6,7,8-tetrahydrofolate + NADP(+). In terms of biological role, catalyzes the folate-dependent formation of 5-methyl-uridine at position 54 (M-5-U54) in all tRNAs. The chain is Methylenetetrahydrofolate--tRNA-(uracil-5-)-methyltransferase TrmFO from Streptococcus pyogenes serotype M3 (strain ATCC BAA-595 / MGAS315).